Here is a 148-residue protein sequence, read N- to C-terminus: Large ribosomal subunit protein uL13 (148 aa).

Basic and acidic residues-rich tracts occupy residues 71–81 (GKKEKQKEYHE) and 89–99 (DHSHSPEEMRA). 2 disordered regions span residues 71–99 (GKKE…EMRA) and 125–148 (KKLK…LDNA).

This sequence belongs to the universal ribosomal protein uL13 family. As to quaternary structure, part of the 50S ribosomal subunit.

This protein is one of the early assembly proteins of the 50S ribosomal subunit, although it is not seen to bind rRNA by itself. It is important during the early stages of 50S assembly. The protein is Large ribosomal subunit protein uL13 of Salinibacter ruber (strain DSM 13855 / M31).